A 621-amino-acid polypeptide reads, in one-letter code: Methionine--tRNA ligase (621 aa).

Positions 11-21 (PYANGPRHIGH) match the 'HIGH' region motif. Cys-143, Cys-146, Cys-156, and Cys-159 together coordinate Zn(2+). The 'KMSKS' region motif lies at 347 to 351 (KFSSS). Ser-350 is a binding site for ATP.

This sequence belongs to the class-I aminoacyl-tRNA synthetase family. MetG type 1 subfamily. Monomer. Zn(2+) serves as cofactor.

The protein resides in the cytoplasm. The enzyme catalyses tRNA(Met) + L-methionine + ATP = L-methionyl-tRNA(Met) + AMP + diphosphate. Is required not only for elongation of protein synthesis but also for the initiation of all mRNA translation through initiator tRNA(fMet) aminoacylation. The polypeptide is Methionine--tRNA ligase (Bifidobacterium longum (strain NCC 2705)).